We begin with the raw amino-acid sequence, 806 residues long: Ribonucleoside-diphosphate reductase large subunit (806 aa).

One can recognise an ATP-cone domain in the interval 1–91; the sequence is MYVLNRKGEE…TDNLHKNTSD (91 aa). Residues 5–6, 11–17, T52, and D56 each bind ATP; these read NR and EDISFDQ. Position 215 (S215) interacts with GDP. Cysteines 216 and 442 form a disulfide. DTTP is bound by residues 224–226, K241, R254, and 261–262; these read DSI and RG. N425 is a binding site for GDP. The Proton acceptor role is filled by N425. C427 serves as the catalytic Cysteine radical intermediate. GDP contacts are provided by residues E429 and 604–607; that span reads TAST. E429 acts as the Proton acceptor in catalysis.

The protein belongs to the ribonucleoside diphosphate reductase large chain family. As to quaternary structure, heterodimer of a large and a small subunit.

It catalyses the reaction a 2'-deoxyribonucleoside 5'-diphosphate + [thioredoxin]-disulfide + H2O = a ribonucleoside 5'-diphosphate + [thioredoxin]-dithiol. Under complex allosteric control mediated by deoxynucleoside triphosphates and ATP binding to separate specificity and activation sites on the large subunit. The type of nucleotide bound at the specificity site determines substrate preference. It seems probable that ATP makes the enzyme reduce CDP and UDP, dGTP favors ADP reduction and dTTP favors GDP reduction. Stimulated by ATP and inhibited by dATP binding to the activity site. Functionally, provides the precursors necessary for DNA synthesis. Catalyzes the biosynthesis of deoxyribonucleotides from the corresponding ribonucleotides. In Plasmodium falciparum (isolate Dd2), this protein is Ribonucleoside-diphosphate reductase large subunit (RNR1).